Reading from the N-terminus, the 349-residue chain is Thiamine-phosphate synthase (349 aa).

The segment at 1–125 is unknown; the sequence is MGCESSLDPR…SAEAAAIRYG (125 aa). The tract at residues 63 to 85 is disordered; sequence RARSTVTDPGAGMEHPAQLDRHS. Residues 126 to 349 are thiamine-phosphate synthase; it reads LYDLEVTCLT…LLSSLSRPTL (224 aa). Residues 177 to 181 and asparagine 209 contribute to the 4-amino-2-methyl-5-(diphosphooxymethyl)pyrimidine site; that span reads QHRCK. Residues aspartate 210 and aspartate 229 each contribute to the Mg(2+) site. Residues serine 248 and lysine 277 each coordinate 4-amino-2-methyl-5-(diphosphooxymethyl)pyrimidine. Glycine 304 contributes to the 2-[(2R,5Z)-2-carboxy-4-methylthiazol-5(2H)-ylidene]ethyl phosphate binding site.

It belongs to the thiamine-phosphate synthase family. The cofactor is Mg(2+).

The catalysed reaction is 2-[(2R,5Z)-2-carboxy-4-methylthiazol-5(2H)-ylidene]ethyl phosphate + 4-amino-2-methyl-5-(diphosphooxymethyl)pyrimidine + 2 H(+) = thiamine phosphate + CO2 + diphosphate. The enzyme catalyses 2-(2-carboxy-4-methylthiazol-5-yl)ethyl phosphate + 4-amino-2-methyl-5-(diphosphooxymethyl)pyrimidine + 2 H(+) = thiamine phosphate + CO2 + diphosphate. It carries out the reaction 4-methyl-5-(2-phosphooxyethyl)-thiazole + 4-amino-2-methyl-5-(diphosphooxymethyl)pyrimidine + H(+) = thiamine phosphate + diphosphate. It participates in cofactor biosynthesis; thiamine diphosphate biosynthesis; thiamine phosphate from 4-amino-2-methyl-5-diphosphomethylpyrimidine and 4-methyl-5-(2-phosphoethyl)-thiazole: step 1/1. Functionally, condenses 4-methyl-5-(beta-hydroxyethyl)thiazole monophosphate (THZ-P) and 2-methyl-4-amino-5-hydroxymethyl pyrimidine pyrophosphate (HMP-PP) to form thiamine monophosphate (TMP). In Parasynechococcus marenigrum (strain WH8102), this protein is Thiamine-phosphate synthase.